A 273-amino-acid chain; its full sequence is Dermonecrotic toxin LdSicTox-alphaIB3b (273 aa).

The active site involves H5. 2 residues coordinate Mg(2+): E25 and D27. H41 functions as the Nucleophile in the catalytic mechanism. Cystine bridges form between C45–C51 and C47–C190. D85 lines the Mg(2+) pocket.

This sequence belongs to the arthropod phospholipase D family. Class II subfamily. It depends on Mg(2+) as a cofactor. Expressed by the venom gland.

It is found in the secreted. It catalyses the reaction an N-(acyl)-sphingosylphosphocholine = an N-(acyl)-sphingosyl-1,3-cyclic phosphate + choline. The catalysed reaction is an N-(acyl)-sphingosylphosphoethanolamine = an N-(acyl)-sphingosyl-1,3-cyclic phosphate + ethanolamine. The enzyme catalyses a 1-acyl-sn-glycero-3-phosphocholine = a 1-acyl-sn-glycero-2,3-cyclic phosphate + choline. It carries out the reaction a 1-acyl-sn-glycero-3-phosphoethanolamine = a 1-acyl-sn-glycero-2,3-cyclic phosphate + ethanolamine. Dermonecrotic toxins cleave the phosphodiester linkage between the phosphate and headgroup of certain phospholipids (sphingolipid and lysolipid substrates), forming an alcohol (often choline) and a cyclic phosphate. This toxin acts on sphingomyelin (SM). It may also act on ceramide phosphoethanolamine (CPE), lysophosphatidylcholine (LPC) and lysophosphatidylethanolamine (LPE), but not on lysophosphatidylserine (LPS), and lysophosphatidylglycerol (LPG). It acts by transphosphatidylation, releasing exclusively cyclic phosphate products as second products. Induces dermonecrosis, hemolysis, increased vascular permeability, edema, inflammatory response, and platelet aggregation. The chain is Dermonecrotic toxin LdSicTox-alphaIB3b from Loxosceles deserta (Desert recluse spider).